Consider the following 296-residue polypeptide: MNSTLYSTSPGTYWEQYEEVSQHSAHLNVVERLWSAWYAWMQNDVLATGIMSFVMHEIVYFGRSVPWILIDTLGLFKNYKIQNNKIPSLREQWDCAKFVLLSHFTVELPQIWLFHPMAQFFGLSTSVPFPSVWTMMYQIAIFFVLEDTWHYFSHRALHWGPLYKAIHKIHHQYSAPFGMAAEYASPIEVMILGFGTVGCPILWCALTGDLHIFTMYVWIVLRLFQAIDAHSGYEFPWSLHHFLPFWAGADHHDLHHEKFVGNYSSSFRWWDYLLDTEYTPEALKRRREGKLTKKAQ.

Transmembrane regions (helical) follow at residues 50 to 70 (IMSF…WILI), 98 to 118 (FVLL…HPMA), and 125 to 145 (TSVP…FFVL). Positions 140 to 276 (AIFFVLEDTW…FRWWDYLLDT (137 aa)) constitute a Fatty acid hydroxylase domain. Residues 154 to 158 (HRALH) carry the Histidine box-1 motif. Residues 167–171 (HKIHH) carry the Histidine box-2 motif. The chain crosses the membrane as a helical span at residues 201-221 (ILWCALTGDLHIFTMYVWIVL). Residues 251–257 (HHDLHHE) carry the Histidine box-3 motif.

Belongs to the sterol desaturase family. Fe cation serves as cofactor.

The protein localises to the endoplasmic reticulum membrane. It participates in steroid metabolism; ergosterol biosynthesis. Functionally, sterol-C4-methyl oxidase; part of the third module of ergosterol biosynthesis pathway that includes the late steps of the pathway. Erg25B is a catalytic component of the C-4 demethylation complex that catalyzes the conversion of 4,4-dimethylfecosterol into fecosterol via 4-methylfecosterol. The third module or late pathway involves the ergosterol synthesis itself through consecutive reactions that mainly occur in the endoplasmic reticulum (ER) membrane. Firstly, the squalene synthase erg9 catalyzes the condensation of 2 farnesyl pyrophosphate moieties to form squalene, which is the precursor of all steroids. Squalene synthase is crucial for balancing the incorporation of farnesyl diphosphate (FPP) into sterol and nonsterol isoprene synthesis. Secondly, squalene is converted into lanosterol by the consecutive action of the squalene epoxidase erg1 and the lanosterol synthase erg7. Then, the delta(24)-sterol C-methyltransferase erg6 methylates lanosterol at C-24 to produce eburicol. Eburicol is the substrate of the sterol 14-alpha demethylase encoded by cyp51A and cyp51B, to yield 4,4,24-trimethyl ergosta-8,14,24(28)-trienol. The C-14 reductase erg24 then reduces the C14=C15 double bond which leads to 4,4-dimethylfecosterol. A sequence of further demethylations at C-4, involving the C-4 demethylation complex containing the C-4 methylsterol oxidases erg25A or erg25B, the sterol-4-alpha-carboxylate 3-dehydrogenase erg26 and the 3-keto-steroid reductase erg27, leads to the production of fecosterol via 4-methylfecosterol. The C-8 sterol isomerase erg2 then catalyzes the reaction which results in unsaturation at C-7 in the B ring of sterols and thus converts fecosterol to episterol. The sterol-C5-desaturase erg3B then catalyzes the introduction of a C-5 double bond in the B ring to produce 5-dehydroepisterol. The 2 other sterol-C5-desaturases, erg3A and erg3C, seem to be less important in ergosterol biosynthesis. The C-22 sterol desaturase erg5 further converts 5-dehydroepisterol into ergosta-5,7,22,24(28)-tetraen-3beta-ol by forming the C-22(23) double bond in the sterol side chain. Finally, ergosta-5,7,22,24(28)-tetraen-3beta-ol is substrate of the C-24(28) sterol reductases erg4A and erg4B to produce ergosterol. Possible alternative sterol biosynthetic pathways might exist from fecosterol to ergosterol, depending on the activities of the erg3 isoforms. In Aspergillus fumigatus (strain ATCC MYA-4609 / CBS 101355 / FGSC A1100 / Af293) (Neosartorya fumigata), this protein is Methylsterol monooxygenase erg25B.